Reading from the N-terminus, the 1141-residue chain is DNA-directed RNA polymerase subunit beta (1141 aa).

Acidic residues-rich tracts occupy residues 1063–1074 (EIEIKEDDDDVS) and 1096–1141 (GGNE…GDEE). A disordered region spans residues 1063 to 1141 (EIEIKEDDDD…VPDEAYGDEE (79 aa)).

Belongs to the RNA polymerase beta chain family. In terms of assembly, the RNAP catalytic core consists of 2 alpha, 1 beta, 1 beta' and 1 omega subunit. When a sigma factor is associated with the core the holoenzyme is formed, which can initiate transcription.

It carries out the reaction RNA(n) + a ribonucleoside 5'-triphosphate = RNA(n+1) + diphosphate. In terms of biological role, DNA-dependent RNA polymerase catalyzes the transcription of DNA into RNA using the four ribonucleoside triphosphates as substrates. The chain is DNA-directed RNA polymerase subunit beta from Moorella thermoacetica (strain ATCC 39073 / JCM 9320).